The chain runs to 143 residues: Transcriptional regulator MraZ (143 aa).

SpoVT-AbrB domains follow at residues 6 to 49 and 78 to 121; these read TYNH…NEAE and SDET…DLKV.

Belongs to the MraZ family. As to quaternary structure, forms oligomers.

It is found in the cytoplasm. The protein localises to the nucleoid. The protein is Transcriptional regulator MraZ of Spiroplasma kunkelii.